The sequence spans 524 residues: MKNSIFKNKYNSTQYNLNSSVDIVLVGAGIMSVTLGSFLTILEPSWIIHIYERLNKPAQESSNSWNNAGTGHAAFCELNYTKYNKINDSIDITKALSINTAFELSLQFWAFLTKNGIINNPKSFINNIPHISFVWGQKNINFLKKRFQTLQTHNLFHGMIYSEDPHQIKSWIPLVMTGRNNNQKVAATYMPMGTDINFEEITTQLLAQLKKNPNFNIYLEHDVTHIERHNNKYWKISVQDIQHKKTIHTYTKYVFIGAGGKSLNLLQTANIQSVSGYAGFPVGGQFLVTYNPEIVSQHQAKVYGKANVSMPPMSVPHIDTRILNNKKVLLFGPFATFSSKFLKYGSWLDLFHSLNKHNLKPIIQAGIDNFPLIKYLFNQLIMSNHDRINALKEYYPEVNSKDWFLIQAGQRVQIIKKNNKNRGILQFGTEIVSSADGSLSALLGASPGASISVSITIKLLNIMFQNKYYNDLWKTKLIEIVPSYINPTLNNYHSDFMKQIRKNTRNILKLIYIEKENRSLIFKK.

This sequence belongs to the MQO family. It depends on FAD as a cofactor.

The enzyme catalyses (S)-malate + a quinone = a quinol + oxaloacetate. It functions in the pathway carbohydrate metabolism; tricarboxylic acid cycle; oxaloacetate from (S)-malate (quinone route): step 1/1. This chain is Probable malate:quinone oxidoreductase, found in Blochmanniella floridana.